The primary structure comprises 526 residues: Fluoride export protein 1 (526 aa).

Disordered stretches follow at residues 1–73 (MMTA…RRAS) and 90–149 (ASNI…KQAG). The Cytoplasmic portion of the chain corresponds to 1 to 159 (MMTAPSDTEG…VVAKRQKVSR (159 aa)). Basic and acidic residues-rich tracts occupy residues 21 to 36 (SPDR…DHNH) and 103 to 123 (PITR…YLRE). A helical membrane pass occupies residues 160-180 (LATELYTISYLIFFSLLGTLA). Over 181-194 (RLGLQALTSAYPQS) the chain is Extracellular. The helical transmembrane segment at 195–215 (PIIFPSIWPNFAGCVVMGFLA) threads the bilayer. Topologically, residues 216-260 (EDRMLFRPDWGQQQPNPKKDDDDDEEAKDIDPAAAKKAHMALKKT) are cytoplasmic. Positions 223-242 (PDWGQQQPNPKKDDDDDEEA) are disordered. The chain crosses the membrane as a helical span at residues 261 to 281 (IPLYVGLATGFCGSFTSFSSF). Residues 282–310 (IRDIYLALSNDLAAHGSSAAPVSRNGGYS) lie on the Extracellular side of the membrane. The helical transmembrane segment at 311–331 (FMALLAVTITTISLSLSGLFA) threads the bilayer. Residues 332-361 (GAHLAIAIATLFTRFDLGLPYTFVSRILDR) are Cytoplasmic-facing. The helical transmembrane segment at 362-382 (LIVLLGFGCWLGAVLLSIWPP) threads the bilayer. Residues 383–398 (DRHSAQPEKERWRGTA) are Extracellular-facing. A helical transmembrane segment spans residues 399-419 (TFALVFAPLGCLTRFYASAHL). Residues 420–424 (NGRLP) are Cytoplasmic-facing. A helical membrane pass occupies residues 425 to 445 (SFPLGTFVVNMLGTAVLGMAW). The Extracellular segment spans residues 446–452 (DLNHVPS). Residues 453–473 (LGGVVGCQVLQGVADGFCGCL) traverse the membrane as a helical segment. The Cytoplasmic segment spans residues 474-492 (TTVSTWVSELAALRRRHAY). Residues 493 to 513 (VYGGASVGGGLALMVVVMGSL) form a helical membrane-spanning segment. Over 514–526 (RWTEGFGEVKCIS) the chain is Extracellular.

This sequence belongs to the fluoride channel Fluc/FEX (TC 1.A.43) family.

The protein resides in the cell membrane. It catalyses the reaction fluoride(in) = fluoride(out). Functionally, fluoride channel required for the rapid expulsion of cytoplasmic fluoride. The polypeptide is Fluoride export protein 1 (Neurospora crassa (strain ATCC 24698 / 74-OR23-1A / CBS 708.71 / DSM 1257 / FGSC 987)).